A 327-amino-acid chain; its full sequence is GMP reductase (327 aa).

Cys175 acts as the Thioimidate intermediate in catalysis. 204–227 (IIADGGIRTPGDIAKSIRFGATMV) contacts NADP(+).

This sequence belongs to the IMPDH/GMPR family. GuaC type 2 subfamily.

The enzyme catalyses IMP + NH4(+) + NADP(+) = GMP + NADPH + 2 H(+). Its function is as follows. Catalyzes the irreversible NADPH-dependent deamination of GMP to IMP. It functions in the conversion of nucleobase, nucleoside and nucleotide derivatives of G to A nucleotides, and in maintaining the intracellular balance of A and G nucleotides. This chain is GMP reductase, found in Clostridium acetobutylicum (strain ATCC 824 / DSM 792 / JCM 1419 / IAM 19013 / LMG 5710 / NBRC 13948 / NRRL B-527 / VKM B-1787 / 2291 / W).